The following is a 717-amino-acid chain: Ubinuclein-2 (717 aa).

Disordered stretches follow at residues 114 to 136 (KDGS…TEDS), 166 to 308 (LERI…SAKS), and 620 to 717 (ADSS…NLPS). The span at 118 to 136 (DGEELDGAPDDDDYDTEDS) shows a compositional bias: acidic residues. Composition is skewed to polar residues over residues 214–246 (QSAS…NGND) and 285–308 (SSKS…SAKS). A compositionally biased stretch (basic and acidic residues) spans 623 to 632 (SFERSKQQHE). The short motif at 634–641 (LKRTSSLS) is the Nuclear localization signal element. The segment covering 653 to 665 (KTEPALEETHLPA) has biased composition (basic and acidic residues). Residues 675-705 (RQTHLKSKTHKQVQVHPQSKAHKQAQVHPKA) are compositionally biased toward basic residues. Positions 706-717 (KTQTPPDLNLPS) are enriched in polar residues.

Belongs to the ubinuclein family. As to quaternary structure, component of the HIRA complex made of UBN1, UBN2, ASF1A, CABIN1 and HIRA. Interacts with HIRA.

Its subcellular location is the nucleus. It is found in the nucleolus. May be required for replication-independent chromatin assembly. The sequence is that of Ubinuclein-2 from Arabidopsis thaliana (Mouse-ear cress).